We begin with the raw amino-acid sequence, 95 residues long: MRRAEVKRSAHGPADEKAQTGSPRKERCAPWSVGTADGEGDERVPSDPEKGRPQDSAPTGRKQRTSRAGSSWQHSLAAMETMYICGIGQQSYQSR.

Basic and acidic residues-rich tracts occupy residues 1–28 (MRRA…KERC) and 41–53 (DERV…KGRP). The interval 1 to 73 (MRRAEVKRSA…RTSRAGSSWQ (73 aa)) is disordered.

This is an uncharacterized protein from Homo sapiens (Human).